We begin with the raw amino-acid sequence, 448 residues long: Tubulin beta chain (448 aa).

Gln-11, Glu-69, Ser-138, Gly-142, Thr-143, Gly-144, Asn-204, and Asn-226 together coordinate GTP. Position 69 (Glu-69) interacts with Mg(2+). Positions 429–448 are disordered; it reads GIDEGDEDYEIEEEKEPLEY.

It belongs to the tubulin family. In terms of assembly, dimer of alpha and beta chains. A typical microtubule is a hollow water-filled tube with an outer diameter of 25 nm and an inner diameter of 15 nM. Alpha-beta heterodimers associate head-to-tail to form protofilaments running lengthwise along the microtubule wall with the beta-tubulin subunit facing the microtubule plus end conferring a structural polarity. Microtubules usually have 13 protofilaments but different protofilament numbers can be found in some organisms and specialized cells. Requires Mg(2+) as cofactor.

The protein localises to the cytoplasm. The protein resides in the cytoskeleton. In terms of biological role, tubulin is the major constituent of microtubules, a cylinder consisting of laterally associated linear protofilaments composed of alpha- and beta-tubulin heterodimers. Microtubules grow by the addition of GTP-tubulin dimers to the microtubule end, where a stabilizing cap forms. Below the cap, tubulin dimers are in GDP-bound state, owing to GTPase activity of alpha-tubulin. The polypeptide is Tubulin beta chain (nda3) (Schizosaccharomyces pombe (strain 972 / ATCC 24843) (Fission yeast)).